The chain runs to 419 residues: Zinc finger CCCH domain-containing protein 62 (419 aa).

The C3H1-type zinc finger occupies 89-116; sequence SLRKWVCKYWKDGKCKRGEQCQFLHSWS. WD repeat units lie at residues 129–168, 210–247, 256–293, 296–335, and 383–419; these read GHNK…CVHS, GVVG…ESDP, GHSG…CIMT, QHTG…KVVQ, and FSTH…GNKV.

This is Zinc finger CCCH domain-containing protein 62 (ZFWD4) from Arabidopsis thaliana (Mouse-ear cress).